Reading from the N-terminus, the 351-residue chain is MMESSTILQRRALFNEAGDIELHKRRMVGGNTTNLNDFNNMKYPWVSKWYRQAMNNFWIPEEINMSSDVQDYRNLSAIEKTAYDKILSFLIFLDSIQTANLPNIGQYITANEINLCLTIQAFQEAVHSQSYSYMLDTICSPEERNDILYQWKDDEHLLARNKFIGNLYNEFQDDKSVLALLKVAIANYVLEGIYFYSGFMFFYNLGRNNKMPGSVQEIRYINRDENTHLWLFRSIIQELQKEEPQVFTARNVRLFRDMIREGCEQEIKWGDYVIGDQIPGLNRHMVADYIRYLGNLRCENLGFEPLYEGHRVEPESMSWVSQYSNANLIKTDFFEAKSTAYAKSSAMVDDL.

Fe cation-binding residues include aspartate 94, glutamate 124, and histidine 127. The active site involves tyrosine 131. 3 residues coordinate Fe cation: glutamate 191, glutamate 225, and histidine 228.

The protein belongs to the ribonucleoside diphosphate reductase small chain family. Tetramer of two alpha and two beta subunits. It depends on Fe cation as a cofactor.

The catalysed reaction is a 2'-deoxyribonucleoside 5'-diphosphate + [thioredoxin]-disulfide + H2O = a ribonucleoside 5'-diphosphate + [thioredoxin]-dithiol. In terms of biological role, provides the precursors necessary for DNA synthesis. Catalyzes the biosynthesis of deoxyribonucleotides from the corresponding ribonucleotides. The sequence is that of Ribonucleoside-diphosphate reductase subunit beta (nrdB) from Treponema pallidum (strain Nichols).